Here is a 49-residue protein sequence, read N- to C-terminus: Large ribosomal subunit protein bL33 (49 aa).

Belongs to the bacterial ribosomal protein bL33 family.

In Clostridium acetobutylicum (strain ATCC 824 / DSM 792 / JCM 1419 / IAM 19013 / LMG 5710 / NBRC 13948 / NRRL B-527 / VKM B-1787 / 2291 / W), this protein is Large ribosomal subunit protein bL33.